Here is a 297-residue protein sequence, read N- to C-terminus: Acetaldehyde dehydrogenase (297 aa).

15 to 18 (SGSI) is a binding site for NAD(+). Catalysis depends on Cys130, which acts as the Acyl-thioester intermediate. Residues 162–170 (SAGIATREN) and Asn272 contribute to the NAD(+) site.

The protein belongs to the acetaldehyde dehydrogenase family.

The catalysed reaction is acetaldehyde + NAD(+) + CoA = acetyl-CoA + NADH + H(+). This Burkholderia pseudomallei (strain 1106a) protein is Acetaldehyde dehydrogenase.